We begin with the raw amino-acid sequence, 426 residues long: Phosphomethylpyrimidine synthase (426 aa).

Substrate contacts are provided by residues asparagine 65, methionine 94, tyrosine 123, histidine 162, 184 to 186 (SRG), 225 to 228 (DGMR), and glutamate 264. A Zn(2+)-binding site is contributed by histidine 268. Substrate is bound at residue tyrosine 291. Residue histidine 332 participates in Zn(2+) binding. [4Fe-4S] cluster contacts are provided by cysteine 408, cysteine 411, and cysteine 415.

The protein belongs to the ThiC family. [4Fe-4S] cluster is required as a cofactor.

The enzyme catalyses 5-amino-1-(5-phospho-beta-D-ribosyl)imidazole + S-adenosyl-L-methionine = 4-amino-2-methyl-5-(phosphooxymethyl)pyrimidine + CO + 5'-deoxyadenosine + formate + L-methionine + 3 H(+). The protein operates within cofactor biosynthesis; thiamine diphosphate biosynthesis. Its function is as follows. Catalyzes the synthesis of the hydroxymethylpyrimidine phosphate (HMP-P) moiety of thiamine from aminoimidazole ribotide (AIR) in a radical S-adenosyl-L-methionine (SAM)-dependent reaction. In Methanococcus maripaludis (strain C7 / ATCC BAA-1331), this protein is Phosphomethylpyrimidine synthase.